The primary structure comprises 438 residues: Glucosamine kinase (438 aa).

ATP contacts are provided by residues Lys-133, 186 to 188, and Asp-193; that span reads AYL. D-glucosamine is bound at residue Asp-300. Gln-305, Asp-317, and Asp-319 together coordinate Mg(2+). Positions 405–420 match the Substrate specificity determinant motif motif; sequence QEVREYLYAVRHLPHW. A D-glucosamine-binding site is contributed by Glu-409.

Belongs to the actinobacterial glucosamine kinase family. In terms of assembly, monomer. It depends on Mg(2+) as a cofactor.

The catalysed reaction is D-glucosamine + ATP = D-glucosamine 6-phosphate + ADP + H(+). In terms of biological role, catalyzes the ATP-dependent phosphorylation of D-glucosamine (GlcN) to D-glucosamine 6-phosphate. May be involved in the phosphorylation of acquired extracellular GlcN derived from the hydrolysis of chitosan, i.e., in the incorporation of exogenous GlcN into the bacterial GlcNAc metabolism. To a lesser extent, is also active on glucose, but is unable to phosphorylate maltose, 18 other sugars and several aminoglycoside antibiotics. This chain is Glucosamine kinase, found in Streptacidiphilus jiangxiensis.